A 74-amino-acid chain; its full sequence is APVDEKNPQAVALGYVSDAAKADKAKYKQFVAGSHCGNCALFQGKATDAVGGCPLFAGKQVANKGWCSAWAKKA.

[4Fe-4S] cluster-binding residues include Cys-36, Cys-39, Cys-53, and Cys-67.

The protein belongs to the high-potential iron-sulfur protein (HiPIP) family. In terms of assembly, homodimer.

In terms of biological role, specific class of high-redox-potential 4Fe-4S ferredoxins. Functions in anaerobic electron transport in most purple and in some other photosynthetic bacteria and in at least one genus (Paracoccus) of halophilic, denitrifying bacteria. This chain is High-potential iron-sulfur protein (hip), found in Rubrivivax gelatinosus (Rhodocyclus gelatinosus).